Reading from the N-terminus, the 506-residue chain is Acrylate reductase flavoprotein subunit (506 aa).

Residues 1-30 constitute a signal peptide (tat-type signal); that stretch reads MSNKDLLGRRNFIKGMGAAAGVAMAAPALA. 5 residues coordinate FAD: alanine 54, glutamate 74, asparagine 82, glycine 87, and glycine 88. The Proton donor role is filled by arginine 333. Positions 473 and 489 each coordinate FAD.

This sequence belongs to the FAD-dependent oxidoreductase 2 family. FRD/SDH subfamily. In terms of assembly, the ArdAB flavocytochrome c is composed of a FAD-containing subunit (ArdA) and a heme c-containing subunit (ArdB). It depends on FAD as a cofactor. Post-translationally, predicted to be exported by the Tat system. The position of the signal peptide cleavage has not been experimentally proven.

It localises to the periplasm. Its activity is regulated as follows. Methacrylate acts as a competitive inhibitor of the acrylate reductase activity and suppresses the reductase activity in dose-dependent manner. In terms of biological role, FAD-containing subunit of the ArdAB flavocytochrome c, which catalyzes the reduction of acrylate to propanoate and supports dimethylsulfoniopropionate-dependent anaerobic respiration. In vitro, can use the artificial electron donor methyl viologen. The natural electron donor is probably a low-potential cytochrome c. Also shows weak activity toward methacrylate in vitro (at a 22-fold lower rate) but cannot use other tested 2-enoates, including crotonic, fumaric, sorbic, urocanic, cinnamic, p-coumaric, caffeic or ferulic acids. The protein catalyzes a unidirectional reaction and cannot oxidize propanoate with phenazine metasulfate and dichlorophenolindophenol as electron acceptors. This chain is Acrylate reductase flavoprotein subunit, found in Shewanella woodyi (strain ATCC 51908 / MS32).